The primary structure comprises 621 residues: Type 2 DNA topoisomerase 6 subunit B (621 aa).

ATP is bound by residues Asn48, Asp80, 101–102, 111–118, and Lys435; these read SR and GQQGIGIS.

It belongs to the TOP6B family. In terms of assembly, homodimer. Heterotetramer of two Top6A and two Top6B chains.

It catalyses the reaction ATP-dependent breakage, passage and rejoining of double-stranded DNA.. Functionally, relaxes both positive and negative superturns and exhibits a strong decatenase activity. The sequence is that of Type 2 DNA topoisomerase 6 subunit B from Methanosarcina acetivorans (strain ATCC 35395 / DSM 2834 / JCM 12185 / C2A).